We begin with the raw amino-acid sequence, 567 residues long: Structural protein ORF567 (567 aa).

Positions 7 to 393 (INALLGFPEE…MPIEHKPEQQ (387 aa)) are disordered. The segment covering 65–79 (TPTPIRPAPPPPPPI) has biased composition (pro residues). The span at 180–200 (PKREPEHHTHGSTNNEHESKR) shows a compositional bias: basic and acidic residues. Low complexity predominate over residues 219 to 231 (THQTSPSHSSGGT). Pro residues-rich tracts occupy residues 253–278 (MPIP…PTPP) and 285–299 (TPTP…PPPT). Over residues 300–312 (HGSSSTNSSGSTN) the composition is skewed to low complexity. A compositionally biased stretch (pro residues) spans 319–335 (PKPIPIPPTPPPPPPHH). The span at 343 to 353 (PKHESEHHDHG) shows a compositional bias: basic and acidic residues. Low complexity predominate over residues 354–372 (SSSTNSSSSTSNSSSGGTN).

It localises to the virion. This is Structural protein ORF567 from Acidianus two-tailed virus (ATV).